A 504-amino-acid polypeptide reads, in one-letter code: Peptidyl-prolyl cis-trans isomerase CYP57 (504 aa).

Residue Ser-2 is modified to N-acetylserine. Residues 16-167 (IVNTTHGPID…DPAPKILSVE (152 aa)) enclose the PPIase cyclophilin-type domain. The stretch at 204-274 (NLLSFGEEAE…AKKEAAQKDK (71 aa)) forms a coiled coil. 3 stretches are compositionally biased toward basic and acidic residues: residues 237-275 (RLLKAEASDKERNASESKEVLSVREALNAKKEAAQKDKS), 344-354 (EDEKPRMEKLS), and 364-374 (AKAEHMEKGDT). Disordered stretches follow at residues 237–374 (RLLK…KGDT), 416–441 (AKPFTSSNEPVVLTSSSEPVDNKEED), and 482–504 (EKFNRMQAKQKRREREWSGKSLA). The segment covering 416-434 (AKPFTSSNEPVVLTSSSEP) has biased composition (polar residues). Positions 494 to 504 (REREWSGKSLA) are enriched in basic and acidic residues.

Belongs to the cyclophilin-type PPIase family. As to expression, ubiquitous.

The protein localises to the nucleus. The protein resides in the cytoplasm. It catalyses the reaction [protein]-peptidylproline (omega=180) = [protein]-peptidylproline (omega=0). Its function is as follows. PPIases accelerate the folding of proteins. It catalyzes the cis-trans isomerization of proline imidic peptide bonds in oligopeptides. Involved in plant response to pathogen infection by increasing PAD4 expression in absence of EDS1 up-regulation. The protein is Peptidyl-prolyl cis-trans isomerase CYP57 (CYP57) of Arabidopsis thaliana (Mouse-ear cress).